The sequence spans 74 residues: Small ribosomal subunit protein uS15 (74 aa).

The protein belongs to the universal ribosomal protein uS15 family. Part of the 30S ribosomal subunit. Forms a bridge to the 50S subunit in the 70S ribosome, contacting the 23S rRNA.

Its function is as follows. One of the primary rRNA binding proteins, it binds directly to 16S rRNA where it helps nucleate assembly of the platform of the 30S subunit by binding and bridging several RNA helices of the 16S rRNA. Forms an intersubunit bridge (bridge B4) with the 23S rRNA of the 50S subunit in the ribosome. The protein is Small ribosomal subunit protein uS15 of Aster yellows witches'-broom phytoplasma (strain AYWB).